Here is a 344-residue protein sequence, read N- to C-terminus: tRNA(Ile)-lysidine synthase (344 aa).

30–35 (SGGQDS) is an ATP binding site. The tract at residues 323-344 (PPPPAPVPPDPGERSPPPSPLY) is disordered.

The protein belongs to the tRNA(Ile)-lysidine synthase family.

The protein resides in the cytoplasm. The enzyme catalyses cytidine(34) in tRNA(Ile2) + L-lysine + ATP = lysidine(34) in tRNA(Ile2) + AMP + diphosphate + H(+). Functionally, ligates lysine onto the cytidine present at position 34 of the AUA codon-specific tRNA(Ile) that contains the anticodon CAU, in an ATP-dependent manner. Cytidine is converted to lysidine, thus changing the amino acid specificity of the tRNA from methionine to isoleucine. This is tRNA(Ile)-lysidine synthase from Thermosynechococcus vestitus (strain NIES-2133 / IAM M-273 / BP-1).